The chain runs to 344 residues: Cell adhesion molecule CEACAM6 (344 aa).

Positions 1–34 (MGPPSAPPCRLHVPWKEVLLTASLLTFWNPPTTA) are cleaved as a signal peptide. Positions 35 to 142 (KLTIESTPFN…EATGQFHVYP (108 aa)) constitute an Ig-like V-type domain. N-linked (GlcNAc...) asparagine glycans are attached at residues Asn-104, Asn-111, Asn-115, Asn-152, Asn-173, Asn-197, Asn-224, Asn-256, Asn-274, Asn-288, Asn-292, and Asn-309. Ig-like C2-type domains are found at residues 145–232 (PKPS…VTLN) and 240–314 (PTIS…TTVT). An intrachain disulfide couples Cys-167 to Cys-215. An intrachain disulfide couples Cys-259 to Cys-299. Residue Gly-320 is the site of GPI-anchor amidated glycine attachment. Residues 321-344 (SAPVLSAVATVGITIGVLARVALI) constitute a propeptide, removed in mature form.

It belongs to the immunoglobulin superfamily. CEA family. In terms of assembly, homodimer; homodimerizes via its Ig-like V-type domain. Heterodimer with CEACAM8; heterodimerizes via its Ig-like V-type domain. Glycosylated. In terms of tissue distribution, expressed in neutrophils. Expressed in columnar epithelial and goblet cells of the colon. Expressed in numerous tumor cell lines (at protein level).

The protein resides in the cell membrane. It is found in the apical cell membrane. The protein localises to the cell surface. Cell surface glycoprotein that plays a role in cell adhesion and tumor progression. Intercellular adhesion occurs in a calcium- and fibronectin-independent manner. Mediates homophilic and heterophilic cell adhesion with other carcinoembryonic antigen-related cell adhesion molecules, such as CEACAM5 and CEACAM8. Heterophilic interaction with CEACAM8 occurs in activated neutrophils. Plays a role in neutrophil adhesion to cytokine-activated endothelial cells. Plays a role in cell migration and cell adhesion to endothelial cells. The protein is Cell adhesion molecule CEACAM6 of Homo sapiens (Human).